Here is a 1501-residue protein sequence, read N- to C-terminus: RE1-silencing transcription factor A (1501 aa).

The segment at 158–180 (FRCKPCQYKAESEEEFVHHIKIH) adopts a C2H2-type 1 zinc-finger fold. The span at 186–200 (VDNDSKKNPQGKEAD) shows a compositional bias: basic and acidic residues. Residues 186–209 (VDNDSKKNPQGKEADSSIPEESDI) form a disordered region. 7 consecutive C2H2-type zinc fingers follow at residues 214-236 (IQCD…LKHH), 246-268 (YKCT…LRNH), 274-296 (YTCS…IRTH), 302-324 (YQCI…MRTH), 330-353 (FKCE…RQVH), 359-381 (LTCP…VELH), and 387-410 (FLCP…KSRH). Disordered stretches follow at residues 491-514 (SSTQ…SRKS), 569-612 (SFVK…SVAS), 885-929 (PTKV…VPGD), and 1040-1079 (VAAG…GDEQ). 2 stretches are compositionally biased toward basic and acidic residues: residues 498–512 (KASE…DKSR) and 594–605 (ITEKKEKGKQLD). Positions 1067-1079 (QPTSVQPPGGDEQ) are enriched in polar residues. The segment at 1463–1485 (FVCIFCDRTFRKEEEYTKHLRRH) adopts a C2H2-type 9 zinc-finger fold.

It is found in the nucleus. The protein resides in the cytoplasm. Transcriptional repressor which binds neuron-restrictive silencer element (NRSE) and represses neuronal gene transcription in non-neuronal cells. Plays a role in the early development of the nervous system and is required for proper patterning of the neuroectoderm during gastrulation. This involves the correct speciation of the neuroepithelial domain and adequate development of the non-neural ectoderm. The chain is RE1-silencing transcription factor A (rest-a) from Xenopus laevis (African clawed frog).